A 330-amino-acid chain; its full sequence is ADP-L-glycero-D-manno-heptose-6-epimerase (330 aa).

NADP(+) contacts are provided by residues 11 to 12 (FI), 32 to 33 (DN), Lys-39, Lys-54, 75 to 79 (EGACS), and Asn-92. Tyr-139 acts as the Proton acceptor in catalysis. Lys-143 serves as a coordination point for NADP(+). Asn-168 is a substrate binding site. Positions 169 and 177 each coordinate NADP(+). Lys-177 acts as the Proton acceptor in catalysis. Substrate contacts are provided by residues Arg-179, His-186, 200–203 (FGEY), Arg-213, and Tyr-292.

Belongs to the NAD(P)-dependent epimerase/dehydratase family. HldD subfamily. As to quaternary structure, homopentamer. It depends on NADP(+) as a cofactor.

It carries out the reaction ADP-D-glycero-beta-D-manno-heptose = ADP-L-glycero-beta-D-manno-heptose. The protein operates within nucleotide-sugar biosynthesis; ADP-L-glycero-beta-D-manno-heptose biosynthesis; ADP-L-glycero-beta-D-manno-heptose from D-glycero-beta-D-manno-heptose 7-phosphate: step 4/4. Catalyzes the interconversion between ADP-D-glycero-beta-D-manno-heptose and ADP-L-glycero-beta-D-manno-heptose via an epimerization at carbon 6 of the heptose. This Burkholderia vietnamiensis (strain G4 / LMG 22486) (Burkholderia cepacia (strain R1808)) protein is ADP-L-glycero-D-manno-heptose-6-epimerase.